The following is an 825-amino-acid chain: Glycerol-3-phosphate acyltransferase (825 aa).

An HXXXXD motif motif is present at residues 306–311; the sequence is CHRSHM. Residues 802-825 are disordered; the sequence is SASSSTEMEASTSSSQTAEETTQG.

The protein belongs to the GPAT/DAPAT family.

The protein resides in the cell inner membrane. It carries out the reaction sn-glycerol 3-phosphate + an acyl-CoA = a 1-acyl-sn-glycero-3-phosphate + CoA. It functions in the pathway phospholipid metabolism; CDP-diacylglycerol biosynthesis; CDP-diacylglycerol from sn-glycerol 3-phosphate: step 1/3. The chain is Glycerol-3-phosphate acyltransferase from Pectobacterium atrosepticum (strain SCRI 1043 / ATCC BAA-672) (Erwinia carotovora subsp. atroseptica).